A 621-amino-acid chain; its full sequence is E3 SUMO-protein ligase PIAS2 (621 aa).

Residues 11-45 enclose the SAP domain; it reads VSSFRVSELQVLLGFAGRNKSGRKHDLLMRALHLL. An LXXLL motif motif is present at residues 19–23; it reads LQVLL. Residues K46 and K249 each participate in a glycyl lysine isopeptide (Lys-Gly) (interchain with G-Cter in SUMO2) cross-link. Residues 134–299 form the PINIT domain; sequence QPSPPIPPVH…SMSVYLVRQL (166 aa). The SP-RING-type zinc finger occupies 331–412; that stretch reads PDSEIATTSL…FMEILNDCSD (82 aa). Residues C362, H364, C385, and C388 each contribute to the Zn(2+) site. Glycyl lysine isopeptide (Lys-Gly) (interchain with G-Cter in SUMO2) cross-links involve residues K430, K435, K443, and K452. Residues 467–473 form an SUMO1-binding region; sequence IDVIDLT. Phosphoserine is present on residues S476, S477, and S478. Positions 484 to 492 match the Nuclear localization signal motif; it reads PPAKRKCIF. Residue K489 forms a Glycyl lysine isopeptide (Lys-Gly) (interchain with G-Cter in SUMO2) linkage. S499 is modified (phosphoserine). K502 is covalently cross-linked (Glycyl lysine isopeptide (Lys-Gly) (interchain with G-Cter in SUMO2)). The span at 577–610 shows a compositional bias: low complexity; the sequence is TASSTSVTTTSPHESSTHVSSSSSRSETGVITSS. The disordered stretch occupies residues 577–621; it reads TASSTSVTTTSPHESSTHVSSSSSRSETGVITSSGRNIPDIISLD.

This sequence belongs to the PIAS family. Binds SUMO1 and UBE2I. Interacts with AXIN1, JUN, MDM2, PARK7, TP53 and TP73 isoform alpha, but not TP73 isoform beta. Interacts with STAT4 following IL12 and IFN-alpha stimulation of T-cells. Interacts also with GTF2I, GTF2IRD1, IKFZ1, DAB2 and MSX2, as well as with several steroid receptors, including ESR1, ESR2, NR3C1, PGR, AR, and with NCOA2. Sumoylation of a target protein seems to enhance the interaction. Binds to sumoylated ELK1. Interacts with PLAG1. Binds DNA, such as CDKN1A promoter, in a sequence-specific manner. Interacts with KLF8; the interaction results in SUMO ligation and repression of KLF8 transcriptional activity and of its cell cycle progression into G(1) phase. Interacts with IFIH1/MDA5. Interacts with PML. Interacts with PRDM1. Post-translationally, sumoylated.

It localises to the nucleus speckle. It is found in the nucleus. Its subcellular location is the PML body. It carries out the reaction S-ubiquitinyl-[E2 ubiquitin-conjugating enzyme]-L-cysteine + [acceptor protein]-L-lysine = [E2 ubiquitin-conjugating enzyme]-L-cysteine + N(6)-ubiquitinyl-[acceptor protein]-L-lysine.. The protein operates within protein modification; protein sumoylation. Functions as an E3-type small ubiquitin-like modifier (SUMO) ligase, stabilizing the interaction between UBE2I and the substrate, and as a SUMO-tethering factor. Plays a crucial role as a transcriptional coregulation in various cellular pathways, including the STAT pathway, the p53 pathway and the steroid hormone signaling pathway. The effects of this transcriptional coregulation, transactivation or silencing may vary depending upon the biological context and PIAS2 isoform studied. However, it seems to be mostly involved in gene silencing. Binds to sumoylated ELK1 and enhances its transcriptional activity by preventing recruitment of HDAC2 by ELK1, thus reversing SUMO-mediated repression of ELK1 transactivation activity. Isoform PIASx-beta, but not isoform PIASx-alpha, promotes MDM2 sumoylation. Isoform PIASx-alpha promotes PARK7 sumoylation. Isoform PIASx-beta promotes NCOA2 sumoylation more efficiently than isoform PIASx-alpha. Sumoylates PML at'Lys-65' and 'Lys-160'. The chain is E3 SUMO-protein ligase PIAS2 (Pias2) from Mus musculus (Mouse).